We begin with the raw amino-acid sequence, 224 residues long: UPF0758 protein PSHAa2643 (224 aa).

The region spanning 102-224 (IFNSPNAVYD…CVSFAERGLI (123 aa)) is the MPN domain. 3 residues coordinate Zn(2+): H173, H175, and D186. The short motif at 173–186 (HNHPSGIAEPSQAD) is the JAMM motif element.

Belongs to the UPF0758 family.

This is UPF0758 protein PSHAa2643 from Pseudoalteromonas translucida (strain TAC 125).